Here is a 610-residue protein sequence, read N- to C-terminus: Zinc metalloproteinase-disintegrin-like bothropasin (610 aa).

The first 20 residues, 1-20, serve as a signal peptide directing secretion; the sequence is MIEVLLVTICLAAFPYQGSS. The propeptide occupies 21-191; it reads IILESGNVND…ASQLVVTAEQ (171 aa). The residue at position 192 (glutamine 192) is a Pyrrolidone carboxylic acid. Residues 198–394 form the Peptidase M12B domain; sequence RYVELFIVVD…ENPQCILNEP (197 aa). Residues glutamate 201 and aspartate 285 each contribute to the Ca(2+) site. Disulfide bonds link cysteine 309–cysteine 389, cysteine 349–cysteine 373, and cysteine 351–cysteine 356. Zn(2+) is bound at residue histidine 334. The active site involves glutamate 335. The Zn(2+) site is built by histidine 338 and histidine 344. Asparagine 372 carries an N-linked (GlcNAc...) asparagine glycan. Cysteine 389, asparagine 392, valine 404, asparagine 407, leucine 409, glutamate 411, glutamate 414, and aspartate 417 together coordinate Ca(2+). In terms of domain architecture, Disintegrin spans 402-488; sequence PPVCGNELLE…ECPADVFHKN (87 aa). Cystine bridges form between cysteine 405-cysteine 424, cysteine 405-cysteine 434, cysteine 416-cysteine 429, cysteine 416-cysteine 434, cysteine 418-cysteine 424, cysteine 428-cysteine 451, cysteine 442-cysteine 448, cysteine 447-cysteine 473, cysteine 460-cysteine 480, cysteine 467-cysteine 492, cysteine 467-cysteine 499, cysteine 492-cysteine 504, cysteine 499-cysteine 504, cysteine 511-cysteine 526, cysteine 511-cysteine 561, cysteine 526-cysteine 572, cysteine 539-cysteine 549, cysteine 549-cysteine 556, cysteine 556-cysteine 598, cysteine 561-cysteine 572, cysteine 592-cysteine 603, and cysteine 598-cysteine 603. The D/ECD-tripeptide signature appears at 466–468; it reads ECD. Residues aspartate 468, proline 469, glutamate 471, aspartate 483, and valine 484 each coordinate Ca(2+).

The protein belongs to the venom metalloproteinase (M12B) family. P-III subfamily. P-IIIb sub-subfamily. As to quaternary structure, monomer. Zn(2+) serves as cofactor. In terms of tissue distribution, expressed by the venom gland.

The protein localises to the secreted. It catalyses the reaction Cleavage of 5-His-|-Leu-6, 10-His-|-Leu-11, 14-Ala-|-Leu-15, 16-Tyr-|-Leu-17 and 24-Phe-|-Phe-25 in insulin B chain.. Its activity is regulated as follows. Inhibited by EDTA and EGTA. Its function is as follows. Has caseinolytic activity. Causes hemorrhage on rabbit skin and causes myonecrosis in mouse tibialis anterior muscle. Functionally, inhibits platelet aggregation. The polypeptide is Zinc metalloproteinase-disintegrin-like bothropasin (Bothrops jararaca (Jararaca)).